The chain runs to 434 residues: Ribosomal protein uS12 methylthiotransferase RimO (434 aa).

Positions 6 to 122 (SKLYLLTLGC…IIAELGGHYK (117 aa)) constitute an MTTase N-terminal domain. Residues C15, C51, C85, C146, C150, and C153 each contribute to the [4Fe-4S] cluster site. Positions 132-361 (LTPPYFSYLK…MAAQEEIAYA (230 aa)) constitute a Radical SAM core domain. Residues 364-434 (QALVGSFMPV…AFDLFGSLVL (71 aa)) form the TRAM domain.

Belongs to the methylthiotransferase family. RimO subfamily. [4Fe-4S] cluster serves as cofactor.

The protein localises to the cytoplasm. The enzyme catalyses L-aspartate(89)-[ribosomal protein uS12]-hydrogen + (sulfur carrier)-SH + AH2 + 2 S-adenosyl-L-methionine = 3-methylsulfanyl-L-aspartate(89)-[ribosomal protein uS12]-hydrogen + (sulfur carrier)-H + 5'-deoxyadenosine + L-methionine + A + S-adenosyl-L-homocysteine + 2 H(+). Its function is as follows. Catalyzes the methylthiolation of an aspartic acid residue of ribosomal protein uS12. This is Ribosomal protein uS12 methylthiotransferase RimO from Chloroherpeton thalassium (strain ATCC 35110 / GB-78).